Reading from the N-terminus, the 392-residue chain is Odorant receptor 85f (392 aa).

Residues 1 to 36 lie on the Cytoplasmic side of the membrane; the sequence is MEPVQYSYEDFARLPTTVFWIMGYDMLGVPKTRSRR. The chain crosses the membrane as a helical span at residues 37–57; the sequence is ILYWIYRFLCLASHGVCVGVM. At 58–69 the chain is on the extracellular side; sequence VFRMVEAKTIDN. Residue asparagine 69 is glycosylated (N-linked (GlcNAc...) asparagine). Residues 70-90 form a helical membrane-spanning segment; the sequence is VSLIMRYATLVTYIINSDTKF. Topologically, residues 91 to 130 are cytoplasmic; sequence ATVLQRSAIQSLNSKLAELYPKTTLDRIYHRVNDHYWTKS. A helical membrane pass occupies residues 131 to 151; the sequence is FVYLVIIYIGSSIMVVIGPII. The Extracellular segment spans residues 152-179; sequence TSIIAYFTHNVFTYMHCYPYFLYDPEKD. A helical transmembrane segment spans residues 180-200; the sequence is PVWIYISIYALEWLHSTQMVI. Residues 201 to 268 lie on the Cytoplasmic side of the membrane; sequence SNIGADIWLL…NDLNGIFGKS (68 aa). Residues 269–289 form a helical membrane-spanning segment; the sequence is LLLSLLTTAAVICTVAVYTLI. Residues 290–295 lie on the Extracellular side of the membrane; the sequence is QGPTLE. A helical transmembrane segment spans residues 296–316; sequence GFTYVIFIGTSVMQVYLVCYY. Over 317–363 the chain is Cytoplasmic; the sequence is GQQVLDLSGEVAHAVYNHDFHDASIAYKRYLLIIIIRAQQPVELNAM. Residues 364 to 384 traverse the membrane as a helical segment; that stretch reads GYLSISLDTFKQLMSVSYRVI. Residues 385–392 lie on the Extracellular side of the membrane; sequence TMLMQMIQ.

Belongs to the insect chemoreceptor superfamily. Heteromeric odorant receptor channel (TC 1.A.69) family. Or49a subfamily. As to quaternary structure, interacts with Orco. Complexes exist early in the endomembrane system in olfactory sensory neurons (OSNs), coupling these complexes to the conserved ciliary trafficking pathway. As to expression, expressed in olfactory sensory neurons in the antenna.

The protein resides in the cell membrane. Functionally, odorant receptor which mediates acceptance or avoidance behavior, depending on its substrates. The odorant receptor repertoire encodes a large collection of odor stimuli that vary widely in identity, intensity, and duration. May form a complex with Orco to form odorant-sensing units, providing sensitive and prolonged odorant signaling and calcium permeability. This chain is Odorant receptor 85f (Or85f), found in Drosophila melanogaster (Fruit fly).